We begin with the raw amino-acid sequence, 117 residues long: Large ribosomal subunit protein bL20 (117 aa).

Belongs to the bacterial ribosomal protein bL20 family.

In terms of biological role, binds directly to 23S ribosomal RNA and is necessary for the in vitro assembly process of the 50S ribosomal subunit. It is not involved in the protein synthesizing functions of that subunit. The chain is Large ribosomal subunit protein bL20 from Campylobacter lari (strain RM2100 / D67 / ATCC BAA-1060).